A 398-amino-acid chain; its full sequence is tRNA(Ile)-lysidine synthase (398 aa).

Residue 17–22 coordinates ATP; sequence SGGPDS.

This sequence belongs to the tRNA(Ile)-lysidine synthase family.

It localises to the cytoplasm. It catalyses the reaction cytidine(34) in tRNA(Ile2) + L-lysine + ATP = lysidine(34) in tRNA(Ile2) + AMP + diphosphate + H(+). Functionally, ligates lysine onto the cytidine present at position 34 of the AUA codon-specific tRNA(Ile) that contains the anticodon CAU, in an ATP-dependent manner. Cytidine is converted to lysidine, thus changing the amino acid specificity of the tRNA from methionine to isoleucine. This is tRNA(Ile)-lysidine synthase from Mesoplasma florum (strain ATCC 33453 / NBRC 100688 / NCTC 11704 / L1) (Acholeplasma florum).